The primary structure comprises 631 residues: MERCDGVMFAARYDPEDGKRESVSEDTESERESESGSESESESEKETESESEKETESESESETGNTGKTGETRKSIGLESVSDSDSDSGSQSRSDSDVEMKEVDASNSNIVSDSSKHKSVLKKLRTSLSAQKAENSTSNSDSDESSVPTHDLAPLPQPALPRDQRLTATTNHIGNLDWLATPIYASTTETVPFSSFGLSSSMVKNLQSNGFSSAFSVQVSVLKLLLPDMESQAIRPDIGGDLLVNAATGSGKTLGYAIPIIESLRNRIVPRVRAIVLVPTKPLISQVKATFAMLSKNTNLSVVSLRSDISINDEAQRLQVVPDIIVSTPGRLVEHLTNGHINLKSLRYLVIDEADRLLNQSFQNWCETLMSRIDSNPISELDQTWRPSVQKLVFSATLTTDAGRLSMLKLQRPRLIIVNDRHELVNELFTVPATLQEYKLSLGSARSSAKPLVLAKFLMSEQKLVNTLVFAKSNEASLRLCRLLQLLFRVFGLDVTVSYLNSTNNAASTRAKILKDFANQTVHILVVTDLIARGIDIATITNVINYDLPNSSRDYVHRVGRTARANQDGEAYTMCFGKGETKWFTQLVREVSRQTEVKDVEKGFRDLVSREDEAKYDTCLEELQRQVFEGV.

The tract at residues 1 to 161 (MERCDGVMFA…LAPLPQPALP (161 aa)) is disordered. Residues 13-23 (YDPEDGKRESV) show a composition bias toward basic and acidic residues. Acidic residues predominate over residues 24 to 41 (SEDTESERESESGSESES). Over residues 42–56 (ESEKETESESEKETE) the composition is skewed to basic and acidic residues. Residues 80–93 (SVSDSDSDSGSQSR) show a composition bias toward low complexity. Basic and acidic residues predominate over residues 94-104 (SDSDVEMKEVD). The short motif at 191-219 (VPFSSFGLSSSMVKNLQSNGFSSAFSVQV) is the Q motif element. The 184-residue stretch at 233–416 (AIRPDIGGDL…MLKLQRPRLI (184 aa)) folds into the Helicase ATP-binding domain. Position 246–253 (246–253 (AATGSGKT)) interacts with ATP. The DEAD box motif lies at 352 to 355 (DEAD). The 150-residue stretch at 459-608 (MSEQKLVNTL…DVEKGFRDLV (150 aa)) folds into the Helicase C-terminal domain.

This sequence belongs to the DEAD box helicase family. DDX51/DBP6 subfamily. In terms of assembly, associated with pre-ribosomal particles.

The protein localises to the nucleus. The protein resides in the nucleolus. It catalyses the reaction ATP + H2O = ADP + phosphate + H(+). ATP-binding RNA helicase involved in the biogenesis of 60S ribosomal subunits and is required for the normal formation of 25S and 5.8S rRNAs. This chain is ATP-dependent RNA helicase DBP6 (DBP6), found in Meyerozyma guilliermondii (strain ATCC 6260 / CBS 566 / DSM 6381 / JCM 1539 / NBRC 10279 / NRRL Y-324) (Yeast).